Here is a 273-residue protein sequence, read N- to C-terminus: Type II pantothenate kinase (273 aa).

8–15 is a binding site for ATP; it reads DAGGTLTK. The active-site Proton acceptor is glutamate 76. ATP is bound by residues threonine 105, 127-131, phenylalanine 143, and serine 230; that span reads GGTIM.

It belongs to the type II pantothenate kinase family. Homodimer.

The protein resides in the cytoplasm. The enzyme catalyses (R)-pantothenate + ATP = (R)-4'-phosphopantothenate + ADP + H(+). Its pathway is cofactor biosynthesis; coenzyme A biosynthesis; CoA from (R)-pantothenate: step 1/5. In terms of biological role, catalyzes the phosphorylation of pantothenate (Pan), the first step in CoA biosynthesis. The protein is Type II pantothenate kinase of Bacillus cereus (strain G9842).